The chain runs to 438 residues: Minor myo-inositol transporter IolF (438 aa).

Transmembrane regions (helical) follow at residues 15-35 (IAAA…SAGL), 49-69 (IGLL…ALLG), 86-106 (MLVY…PMLL), 108-128 (GYII…TIIA), 147-167 (WAAG…LGLL), 171-191 (IVFA…IRLP), 230-250 (ILFL…MGFF), 268-288 (LLQM…FMPF), 295-312 (TVFG…TLFL), 317-334 (GLPI…NNGA), 359-379 (LMFF…PMII), and 387-407 (MAAI…LFAP).

It belongs to the major facilitator superfamily. Sugar transporter (TC 2.A.1.1) family.

The protein localises to the cell membrane. Its pathway is polyol metabolism; myo-inositol degradation into acetyl-CoA. Minor myo-inositol uptake transporter. This Bacillus subtilis (strain 168) protein is Minor myo-inositol transporter IolF (iolF).